A 1342-amino-acid polypeptide reads, in one-letter code: Subtilisin-like protease 2 (1342 aa).

The signal sequence occupies residues 1–18; that stretch reads MLNIIYVVSLILIKFIFY. Residues 19-687 constitute a propeptide, inhibition peptide; it reads KECNNNNNYY…KLYNNKYSFL (669 aa). Disordered stretches follow at residues 85-111 and 143-171; these read EKKTKGEENEIEKKKENDLEEKKENEI and ADVSNNDNSGHEENNKHKLNKKNSSNYKN. N-linked (GlcNAc...) asparagine glycosylation is found at asparagine 165, asparagine 343, asparagine 451, asparagine 455, and asparagine 493. The interval 415–474 is disordered; it reads KKSKKEKENTQQKGGNNPNVDINILNNNNNNNNNNNNNSNNNSNSMNDEEINYNNNNNKE. Low complexity predominate over residues 430–474; that stretch reads NNPNVDINILNNNNNNNNNNNNNSNNNSNSMNDEEINYNNNNNKE. The segment at 500-531 is disordered; sequence IYHNKNDNSYKNKKEGTGKNNDNNDPNNNNNK. Residues 503-516 show a composition bias toward basic and acidic residues; it reads NKNDNSYKNKKEGT. The segment covering 518–531 has biased composition (low complexity); the sequence is KNNDNNDPNNNNNK. N-linked (GlcNAc...) asparagine glycosylation is found at asparagine 551, asparagine 642, and asparagine 729. Residues 688–1137 lie on the Extracellular side of the membrane; that stretch reads NKFLNIEPLI…LYNLYEYDSH (450 aa). Residues 727-1020 form the Peptidase S8 domain; that stretch reads TWNLSIIRVF…DSLVNAEGAV (294 aa). Residues aspartate 755 and histidine 798 each act as charge relay system in the active site. 4 N-linked (GlcNAc...) asparagine glycosylation sites follow: asparagine 821, asparagine 857, asparagine 893, and asparagine 951. Catalysis depends on serine 961, which acts as the Charge relay system. N-linked (GlcNAc...) asparagine glycosylation is found at asparagine 1010 and asparagine 1106. The chain crosses the membrane as a helical span at residues 1138–1158; sequence YLLASVILFFLALLSIFVGMI. Residues 1159–1342 are Cytoplasmic-facing; the sequence is YMKSRKHSDK…MNQLDDMFMK (184 aa).

The protein belongs to the peptidase S8 family. In terms of processing, proteolytically cleaved at the N-terminus to generate a 74kDa intermediate which is further processed into a 72kDa form. The first maturation cleavage is autocatalytic, occurs in the ER and is necessary for the subsequent SUB2 trafficking to the microneme. The second cleavage may be mediated by PMX/plasmepsin X.

The protein localises to the cell membrane. It is found in the cytoplasmic vesicle. The protein resides in the secretory vesicle. It localises to the microneme membrane. It catalyses the reaction Hydrolysis of proteins with broad specificity for peptide bonds, and a preference for a large uncharged residue in P1. Hydrolyzes peptide amides.. Activation may be calcium-dependent. Inhibited by the non-covalent interaction with the cleaved propeptide. Its function is as follows. Serine protease which plays an essential role in the shedding of AMA1, MSP1 and MSP7 from the surface of the invading merozoite; this step is essential for productive invasion and the release of the adhesion between the erythrocyte and the merozoite. May cleave TRAMP/PTTRAMP, thereby shedding TRAMP from the merozoite surface during erythrocyte invasion. This is Subtilisin-like protease 2 from Plasmodium falciparum.